Reading from the N-terminus, the 507-residue chain is Protein FAM221B (507 aa).

Disordered stretches follow at residues 1-100, 154-310, and 486-507; these read MEAD…SAQS, LLSP…ESRP, and ETKR…HRPF. A compositionally biased stretch (polar residues) spans 88-100; that stretch reads NLPSTPSQSSAQS. Residues 167 to 177 show a composition bias toward acidic residues; the sequence is SISDVQEEPLE. Polar residues predominate over residues 182–193; it reads ADISETEYSISD. 2 stretches are compositionally biased toward acidic residues: residues 208–222 and 270–281; these read PESE…EEPL and SADEEEAEEEEL. S270 carries the post-translational modification Phosphoserine.

It belongs to the FAM221 family.

The protein is Protein FAM221B (Fam221b) of Rattus norvegicus (Rat).